Consider the following 365-residue polypeptide: Mitochondrial protein C2orf69 homolog (365 aa).

The N-terminal 24 residues, 1–24 (MLGSRRLRSPALVLLLLRPLLASG), are a transit peptide targeting the mitochondrion. A disordered region spans residues 28–64 (SRLQTRAMNPGGGERGSPEDSHRLQRSTVPGSDPQRS). Polar residues predominate over residues 53 to 64 (RSTVPGSDPQRS).

It belongs to the C2orf69 family.

It is found in the mitochondrion matrix. Its function is as follows. May play a role in the respiratory chain. This chain is Mitochondrial protein C2orf69 homolog, found in Mus musculus (Mouse).